Consider the following 657-residue polypeptide: MTQLAIGKPAPLGAHYDGQGVNFTLFSAHAERVELCVFDANGQEHRYDLPGHSGDIWHGYLPDARPGLRYGYRVHGPWQPADGHRFNPAKLLIDPCARQIDGEFKDNPLLHAGHNEPDYRDNAAIAPKCVVVVDHYDWEDDAPPRTPWGSTIIYEAHVKGLTYLHPEIPVEIRGTYKALGHPVMINYLKQLGITALELLPVAQFASEPRLQRMGLSNYWGYNPVAMFALHPAYACSPETALDEFRDAIKALHKAGIEVILDIVLNHSAELDLDGPLFSLRGIDNRSYYWIREDGDYHNWTGCGNTLNLSHPAVVDYASACLRYWVETCHVDGFRFDLAAVMGRTPEFRQDAPLFTAIQNCPVLSQVKLIAEPWDIAPGGYQVGNFPPLFAEWNDHFRDAARRFWLHYDLPLGAFAGRFAASSDVFKRNGRLPSAAINLVTAHDGFTLRDCVCFNHKHNEANGEENRDGTNNNYSNNHGKEGLGGSLDLVERRRDSIHALLTTLLLSQGTPMLLAGDEHGHSQHGNNNAYCQDNQLTWLDWSQASSGLTAFTAALIHLRKRIPALVENRWWEEGDGNVRWLNRYAQPLSTDEWQNGPKQLQILLSDRFLIAINATLEVTEIVLPAGEWHAIPPFAGEDNPVITAVWQGPAHGLCVFQR.

The active-site Nucleophile is Asp336. Catalysis depends on Glu371, which acts as the Proton donor. A compositionally biased stretch (basic and acidic residues) spans 458-467; sequence NEANGEENRD. The segment at 458-479 is disordered; that stretch reads NEANGEENRDGTNNNYSNNHGK.

Belongs to the glycosyl hydrolase 13 family.

It catalyses the reaction Hydrolysis of (1-&gt;6)-alpha-D-glucosidic linkages to branches with degrees of polymerization of three or four glucose residues in limit dextrin.. It participates in glycan degradation; glycogen degradation. Its function is as follows. Removes maltotriose and maltotetraose chains that are attached by 1,6-alpha-linkage to the limit dextrin main chain, generating a debranched limit dextrin. This is Glycogen debranching enzyme from Shigella boydii serotype 18 (strain CDC 3083-94 / BS512).